The sequence spans 162 residues: MHLTDLIEKTLTAMGYELVEVERAPAGLLRVYIDQAENGVVIEDCEKVSHQLTRVFEVENVNYERLEVSSPGLDRPLRTLADFTRFAGLEAKVTLRLPVDGQKNFTGIIQAPTGEPGQERIGLEFEGKEGPALLGFTLSELDRARLVPVLDFKGNRNKGNKQ.

The protein belongs to the RimP family.

The protein resides in the cytoplasm. In terms of biological role, required for maturation of 30S ribosomal subunits. The chain is Ribosome maturation factor RimP from Ralstonia pickettii (strain 12J).